Reading from the N-terminus, the 158-residue chain is Vasotocin-neurophysin VT 2 (158 aa).

The N-terminal stretch at 1 to 19 (MPHSTLLLCVIGLLAFSSA) is a signal peptide. Cys20 and Cys25 are disulfide-bonded. Glycine amide is present on Gly28. 7 disulfide bridges follow: Cys41-Cys85, Cys44-Cys58, Cys52-Cys75, Cys59-Cys65, Cys92-Cys105, Cys99-Cys117, and Cys106-Cys111.

It belongs to the vasopressin/oxytocin family. Post-translationally, seven disulfide bonds are present in neurophysin.

It is found in the secreted. Vasotocin is an antidiuretic hormone. The protein is Vasotocin-neurophysin VT 2 of Oncorhynchus keta (Chum salmon).